We begin with the raw amino-acid sequence, 229 residues long: Cytochrome c oxidase subunit 2 (229 aa).

At 1 to 14 (MANPTHLGFQDAMS) the chain is on the mitochondrial intermembrane side. The helical transmembrane segment at 15-45 (PLMEELLYFHDHTLMILFLISSLVFYMIFAL) threads the bilayer. The Mitochondrial matrix portion of the chain corresponds to 46-59 (LFPKLYYPNTSDVQ). Residues 60–87 (EVEVIWTVLPAIVLISIALPSLRTLYLM) form a helical membrane-spanning segment. The Mitochondrial intermembrane segment spans residues 88 to 229 (DETNNPCLTI…QLWLEDSILS (142 aa)). Residues H161, C196, E198, C200, H204, and M207 each contribute to the Cu cation site. E198 lines the Mg(2+) pocket.

Belongs to the cytochrome c oxidase subunit 2 family. In terms of assembly, component of the cytochrome c oxidase (complex IV, CIV), a multisubunit enzyme composed of 14 subunits. The complex is composed of a catalytic core of 3 subunits MT-CO1, MT-CO2 and MT-CO3, encoded in the mitochondrial DNA, and 11 supernumerary subunits COX4I, COX5A, COX5B, COX6A, COX6B, COX6C, COX7A, COX7B, COX7C, COX8 and NDUFA4, which are encoded in the nuclear genome. The complex exists as a monomer or a dimer and forms supercomplexes (SCs) in the inner mitochondrial membrane with NADH-ubiquinone oxidoreductase (complex I, CI) and ubiquinol-cytochrome c oxidoreductase (cytochrome b-c1 complex, complex III, CIII), resulting in different assemblies (supercomplex SCI(1)III(2)IV(1) and megacomplex MCI(2)III(2)IV(2)). Found in a complex with TMEM177, COA6, COX18, COX20, SCO1 and SCO2. Interacts with TMEM177 in a COX20-dependent manner. Interacts with COX20. Interacts with COX16. Cu cation serves as cofactor.

The protein localises to the mitochondrion inner membrane. The catalysed reaction is 4 Fe(II)-[cytochrome c] + O2 + 8 H(+)(in) = 4 Fe(III)-[cytochrome c] + 2 H2O + 4 H(+)(out). Component of the cytochrome c oxidase, the last enzyme in the mitochondrial electron transport chain which drives oxidative phosphorylation. The respiratory chain contains 3 multisubunit complexes succinate dehydrogenase (complex II, CII), ubiquinol-cytochrome c oxidoreductase (cytochrome b-c1 complex, complex III, CIII) and cytochrome c oxidase (complex IV, CIV), that cooperate to transfer electrons derived from NADH and succinate to molecular oxygen, creating an electrochemical gradient over the inner membrane that drives transmembrane transport and the ATP synthase. Cytochrome c oxidase is the component of the respiratory chain that catalyzes the reduction of oxygen to water. Electrons originating from reduced cytochrome c in the intermembrane space (IMS) are transferred via the dinuclear copper A center (CU(A)) of subunit 2 and heme A of subunit 1 to the active site in subunit 1, a binuclear center (BNC) formed by heme A3 and copper B (CU(B)). The BNC reduces molecular oxygen to 2 water molecules using 4 electrons from cytochrome c in the IMS and 4 protons from the mitochondrial matrix. In Alligator mississippiensis (American alligator), this protein is Cytochrome c oxidase subunit 2 (MT-CO2).